A 140-amino-acid chain; its full sequence is Large ribosomal subunit protein uL13 (140 aa).

It belongs to the universal ribosomal protein uL13 family. Part of the 50S ribosomal subunit.

Functionally, this protein is one of the early assembly proteins of the 50S ribosomal subunit, although it is not seen to bind rRNA by itself. It is important during the early stages of 50S assembly. This is Large ribosomal subunit protein uL13 from Nautilia profundicola (strain ATCC BAA-1463 / DSM 18972 / AmH).